Reading from the N-terminus, the 623-residue chain is Phosphoenolpyruvate carboxykinase [GTP] (623 aa).

Substrate is bound by residues arginine 86 and 220–222 (YGG). 2 residues coordinate Mn(2+): lysine 229 and histidine 248. Serine 270 lines the substrate pocket. 271–276 (MCGKTS) serves as a coordination point for GTP. Residue cysteine 272 is part of the active site. Mn(2+) is bound at residue aspartate 289. Position 384 to 386 (384 to 386 (NAR)) interacts with substrate. Positions 386 and 418 each coordinate GTP.

This sequence belongs to the phosphoenolpyruvate carboxykinase [GTP] family. As to quaternary structure, homotetramer. Mn(2+) serves as cofactor.

It localises to the cytoplasm. It carries out the reaction oxaloacetate + GTP = phosphoenolpyruvate + GDP + CO2. The protein operates within carbohydrate biosynthesis; gluconeogenesis. In terms of biological role, involved in the gluconeogenesis. Catalyzes the conversion of oxaloacetate (OAA) to phosphoenolpyruvate (PEP), the rate-limiting step in the metabolic pathway that produces glucose from lactate and other precursors derived from the citric acid cycle. This chain is Phosphoenolpyruvate carboxykinase [GTP] (pckG), found in Thermococcus kodakarensis (strain ATCC BAA-918 / JCM 12380 / KOD1) (Pyrococcus kodakaraensis (strain KOD1)).